The primary structure comprises 270 residues: Phosphonates import ATP-binding protein PhnC (270 aa).

The region spanning 2–245 is the ABC transporter domain; the sequence is LVIEGLTCRF…IARELYDLEA (244 aa). 34–41 lines the ATP pocket; the sequence is GRSGAGKS.

Belongs to the ABC transporter superfamily. Phosphonates importer (TC 3.A.1.9.1) family. The complex is composed of two ATP-binding proteins (PhnC), two transmembrane proteins (PhnE) and a solute-binding protein (PhnD).

It is found in the cell inner membrane. It carries out the reaction phosphonate(out) + ATP + H2O = phosphonate(in) + ADP + phosphate + H(+). Part of the ABC transporter complex PhnCDE involved in phosphonates import. Responsible for energy coupling to the transport system. In Rhodopseudomonas palustris (strain BisB5), this protein is Phosphonates import ATP-binding protein PhnC.